Here is a 296-residue protein sequence, read N- to C-terminus: 4-hydroxybenzoate octaprenyltransferase (296 aa).

9 helical membrane passes run 28-48, 52-72, 102-122, 123-140, 146-166, 169-189, 219-239, 241-261, and 275-295; these read PIGIYLLLWPTLWAVWIAGKG, LNTVFIFVAGVFLMRAAGCVI, ALVLFAVLVSLSFVLVLFTNS, TTIWLSFGGLALAACYPF, YYPQVVLGAAFSWGMPMAFTA, GELPAAAWLLYIANLLWTVGY, VIILSLQGLALGCLALAGSRF, LGAFFYMGLLVAAACFAWEFW, and FLHNHWAGLAIFLGIVADYAL.

Belongs to the UbiA prenyltransferase family. The cofactor is Mg(2+).

It is found in the cell inner membrane. The catalysed reaction is all-trans-octaprenyl diphosphate + 4-hydroxybenzoate = 4-hydroxy-3-(all-trans-octaprenyl)benzoate + diphosphate. The protein operates within cofactor biosynthesis; ubiquinone biosynthesis. Functionally, catalyzes the prenylation of para-hydroxybenzoate (PHB) with an all-trans polyprenyl group. Mediates the second step in the final reaction sequence of ubiquinone-8 (UQ-8) biosynthesis, which is the condensation of the polyisoprenoid side chain with PHB, generating the first membrane-bound Q intermediate 3-octaprenyl-4-hydroxybenzoate. The sequence is that of 4-hydroxybenzoate octaprenyltransferase from Pseudomonas syringae pv. tomato (strain ATCC BAA-871 / DC3000).